Reading from the N-terminus, the 342-residue chain is Signal-regulatory protein beta-2 (342 aa).

Residues 1–32 form the signal peptide; the sequence is MCSTMSAPTCLAHLPPCFLLLALVLVPSDASG. Ig-like V-type domains are found at residues 33–143 and 157–258; these read QSSR…KSDE and PDLW…SGQG. The Extracellular portion of the chain corresponds to 33–287; it reads QSSRNDWQVL…EPATEMSPTG (255 aa). The cysteines at positions 60 and 127 are disulfide-linked. 3 N-linked (GlcNAc...) asparagine glycosylation sites follow: Asn116, Asn179, and Asn231. Cys180 and Cys242 form a disulfide bridge. The chain crosses the membrane as a helical span at residues 288-308; the sequence is LLVVFAPVVLGLKAITLAALL. Residues 309–342 are Cytoplasmic-facing; that stretch reads LALATSRRSPGQEDVKTTGPAGAMNTLAWSKGQE. The tract at residues 317 to 342 is disordered; it reads SPGQEDVKTTGPAGAMNTLAWSKGQE.

It is found in the membrane. In Homo sapiens (Human), this protein is Signal-regulatory protein beta-2 (SIRPB2).